Reading from the N-terminus, the 106-residue chain is Transcription initiation factor IIA subunit 2 (106 aa).

The protein belongs to the TFIIA subunit 2 family. TFIIA is a heterodimer of the large unprocessed subunit 1 and a small subunit gamma. It was originally believed to be a heterotrimer of an alpha (p30), a beta (p20) and a gamma (p14) subunit. Forms a complex with Moonshiner/CG12721 and Trf2. Ubiquitous.

The protein resides in the nucleus. In terms of biological role, TFIIA is a component of the transcription machinery of RNA polymerase II and plays an important role in transcriptional activation. TFIIA in a complex with TBP mediates transcriptional activity. Part of a rhi-dependent transcription machinery that enables the generation of piRNA precursors from heterochromatin while maintaining the suppression of transposon-encoded promoters and enhancers. Forms a complex with Moonshiner/CG12721 and Trf2 which recruit transcriptional machinery to heterochromatin to initiate the bidirectional transcription of piRNA clusters, by interacting with the RDC (rhi, del and cuff) complex that binds to repressive H3K9me3 marks in the chromatin. This mechanism allows transcription to occur in piRNA clusters despite the lack of proper promoter elements and in the presence of the repressive H3K9me3 mark. The sequence is that of Transcription initiation factor IIA subunit 2 (TfIIA-S) from Drosophila melanogaster (Fruit fly).